Reading from the N-terminus, the 513-residue chain is MALRAPALLPLLLLLLPLRAAGCPAACRCYSATVECGALRLRVVPLGIPPGTQTLFLQDNNIARLEPGALAPLAALRRLYLHNNSLRALEAGAFRAQPRLLELALTSNRLRGLRSGAFVGLAQLRVLYLAGNQLARLLDFTFLHLPRLQELHLQENSIELLEDQALAGLSSLALLDLSRNQLGTISREALQPLASLQVLRLTENPWRCDCALHWLGAWIKEGGQRLLTSRDRKIMCAEPPRLALQSLLDVSHSSLICIPPSVHVQPLELTANLGEDLRVACQASGYPQPLVTWRKVPQPREGRPRAQAQLEGGLLGLGGHSASDTGSGMLFLSNITLAHAGKYECEASNAGGAARVPFRLLVNASRQQPQQPAQPPPPAARPAGSEPRPEAGSMAFRALGVATQTAIAAAIALLALTALLLVAMICRRRRRRKKARGPPGEGALFVNDYLDGPCTFAQLEELRDERGHEMFVINRSKPLFAEGPAEAPADCGPEQGAGPGLRVPPPVAYEIHC.

Residues 1–20 (MALRAPALLPLLLLLLPLRA) form the signal peptide. The region spanning 21–50 (AGCPAACRCYSATVECGALRLRVVPLGIPP) is the LRRNT domain. LRR repeat units lie at residues 51 to 72 (GTQT…ALAP), 75 to 96 (ALRR…AFRA), 99 to 120 (RLLE…AFVG), 123 to 144 (QLRV…TFLH), 147 to 168 (RLQE…ALAG), and 171 to 192 (SLAL…ALQP). The region spanning 204-259 (NPWRCDCALHWLGAWIKEGGQRLLTSRDRKIMCAEPPRLALQSLLDVSHSSLICIP) is the LRRCT domain. The Ig-like C2-type domain occupies 260 to 361 (PSVHVQPLEL…GAARVPFRLL (102 aa)). A disulfide bridge connects residues Cys-281 and Cys-345. 2 N-linked (GlcNAc...) asparagine glycosylation sites follow: Asn-334 and Asn-363. Residues 365-391 (SRQQPQQPAQPPPPAARPAGSEPRPEA) are disordered. A helical membrane pass occupies residues 406-426 (AIAAAIALLALTALLLVAMIC).

It localises to the membrane. This is Leucine-rich repeat-containing protein 24 (LRRC24) from Homo sapiens (Human).